The primary structure comprises 430 residues: Anaerobic glycerol-3-phosphate dehydrogenase subunit B (430 aa).

Belongs to the anaerobic G-3-P dehydrogenase subunit B family. As to quaternary structure, composed of a catalytic GlpA/B dimer and of membrane bound GlpC. The cofactor is FMN.

It catalyses the reaction a quinone + sn-glycerol 3-phosphate = dihydroxyacetone phosphate + a quinol. The protein operates within polyol metabolism; glycerol degradation via glycerol kinase pathway; glycerone phosphate from sn-glycerol 3-phosphate (anaerobic route): step 1/1. In terms of biological role, conversion of glycerol 3-phosphate to dihydroxyacetone. Uses fumarate or nitrate as electron acceptor. The chain is Anaerobic glycerol-3-phosphate dehydrogenase subunit B from Actinobacillus succinogenes (strain ATCC 55618 / DSM 22257 / CCUG 43843 / 130Z).